The sequence spans 90 residues: MSHYGSYYGGLGYSCGGFGGLGYGYGCGCGSFCRRGSGCGYGGYGYGSGFGSYGYGSGFGGYGYGSGFGGYGYGCCRPSYNGGYGFSGFY.

The tract at residues 5 to 84 (GSYYGGLGYS…CCRPSYNGGY (80 aa)) is 26 X 2 AA repeats of G-[YCGS].

Belongs to the KRTAP type 19 family. Interacts with hair keratins. In terms of tissue distribution, detected in the upper portion of the hair cortex.

Its function is as follows. In the hair cortex, hair keratin intermediate filaments are embedded in an interfilamentous matrix, consisting of hair keratin-associated proteins (KRTAP), which are essential for the formation of a rigid and resistant hair shaft through their extensive disulfide bond cross-linking with abundant cysteine residues of hair keratins. The matrix proteins include the high-sulfur and high-glycine-tyrosine keratins. This chain is Keratin-associated protein 19-1 (KRTAP19-1), found in Homo sapiens (Human).